The sequence spans 238 residues: Orotidine 5'-phosphate decarboxylase (238 aa).

Substrate is bound by residues aspartate 10, lysine 32, 59-68 (DLKLHDIPNT), threonine 122, arginine 184, glutamine 193, glycine 213, and arginine 214. Lysine 61 serves as the catalytic Proton donor.

Belongs to the OMP decarboxylase family. Type 1 subfamily. Homodimer.

The catalysed reaction is orotidine 5'-phosphate + H(+) = UMP + CO2. The protein operates within pyrimidine metabolism; UMP biosynthesis via de novo pathway; UMP from orotate: step 2/2. Functionally, catalyzes the decarboxylation of orotidine 5'-monophosphate (OMP) to uridine 5'-monophosphate (UMP). This Bacillus cereus (strain ZK / E33L) protein is Orotidine 5'-phosphate decarboxylase.